Consider the following 92-residue polypeptide: Small ribosomal subunit protein uS19 (92 aa).

The protein belongs to the universal ribosomal protein uS19 family.

Functionally, protein S19 forms a complex with S13 that binds strongly to the 16S ribosomal RNA. The chain is Small ribosomal subunit protein uS19 from Lactococcus lactis subsp. cremoris (strain MG1363).